Reading from the N-terminus, the 388-residue chain is Succinate--CoA ligase [ADP-forming] subunit beta (388 aa).

The 236-residue stretch at 9 to 244 (KEIFARYGLP…PTQESELEVK (236 aa)) folds into the ATP-grasp domain. Residues Lys-46, 53 to 55 (GRG), Glu-99, Thr-102, and Glu-107 contribute to the ATP site. Mg(2+) contacts are provided by Asn-199 and Asp-213. Substrate is bound by residues Asn-264 and 321 to 323 (GIL).

Belongs to the succinate/malate CoA ligase beta subunit family. In terms of assembly, heterotetramer of two alpha and two beta subunits. Mg(2+) serves as cofactor.

The catalysed reaction is succinate + ATP + CoA = succinyl-CoA + ADP + phosphate. The enzyme catalyses GTP + succinate + CoA = succinyl-CoA + GDP + phosphate. Its pathway is carbohydrate metabolism; tricarboxylic acid cycle; succinate from succinyl-CoA (ligase route): step 1/1. Functionally, succinyl-CoA synthetase functions in the citric acid cycle (TCA), coupling the hydrolysis of succinyl-CoA to the synthesis of either ATP or GTP and thus represents the only step of substrate-level phosphorylation in the TCA. The beta subunit provides nucleotide specificity of the enzyme and binds the substrate succinate, while the binding sites for coenzyme A and phosphate are found in the alpha subunit. In Persephonella marina (strain DSM 14350 / EX-H1), this protein is Succinate--CoA ligase [ADP-forming] subunit beta.